The following is a 446-amino-acid chain: MVPQTHGLLLLYFLLQLQGPLGAVVFITQEEAHGVLHRQRRANSLLEELWSSSLERECNEERCSFEEAREIFKSPERTKQFWTIYSDGDQCASNPCQNGGTCQDHLKSYVCFCPLDFEGRNCEKNKNEQLICANENGDCDQYCRDHVGTKRTCSCHEDYVLQPDEVSCKPKVEYPCGRIPVVEKRNFSRPQGRIVGGYVCPKGECPWQAVLKFNEALLCGAVLLDTRWIVTAAHCFDKFGKLVNITVVLGEHDFSEKEGTEQVRLVEQVIMPNKYTRGRTDHDIALVRLHRPVTFTDYVVPLCLPERAFSENTLASIRFSRVSGWGQLLDRGATALELMVIEVPRLMTQDCLEHAKHSANTPRITENMFCAGYMDGTKDACKGDSGGPHATHYHGTWYLTGVVSWGEGCAAIGHIGVYTRVSQYIDWLVKYMDSKLRVGISRVSLL.

An N-terminal signal peptide occupies residues 1–24; it reads MVPQTHGLLLLYFLLQLQGPLGAV. The propeptide occupies 25-41; it reads VFITQEEAHGVLHRQRR. Positions 42–86 constitute a Gla domain; that stretch reads ANSLLEELWSSSLERECNEERCSFEEAREIFKSPERTKQFWTIYS. A 4-carboxyglutamate mark is found at E47, E48, E55, E57, E60, E61, E66, E67, E70, and E76. C58 and C63 are joined by a disulfide. The EGF-like 1; calcium-binding domain maps to 87–123; sequence DGDQCASNPCQNGGTCQDHLKSYVCFCPLDFEGRNCE. Intrachain disulfides connect C91–C102, C96–C111, C113–C122, C132–C143, C139–C153, C155–C168, C176–C303, C200–C205, C219–C235, and C351–C370. S93 is a glycosylation site (O-linked (Glc...) serine; alternate). S93 carries an O-linked (Xyl...) serine; alternate glycan. O-linked (Fuc) threonine glycosylation is present at T101. D104 bears the (3R)-3-hydroxyaspartate mark. Positions 128–169 constitute an EGF-like 2 domain; it reads EQLICANENGDCDQYCRDHVGTKRTCSCHEDYVLQPDEVSCK. Residue N186 is glycosylated (N-linked (GlcNAc...) asparagine). Residues 194-433 enclose the Peptidase S1 domain; that stretch reads IVGGYVCPKG…YIDWLVKYMD (240 aa). The active-site Charge relay system is H234. A glycan (N-linked (GlcNAc...) asparagine) is linked at N244. D283 functions as the Charge relay system in the catalytic mechanism. D379 contacts substrate. C381 and C409 are oxidised to a cystine. Catalysis depends on S385, which acts as the Charge relay system.

Belongs to the peptidase S1 family. Heterodimer of a light chain and a heavy chain linked by a disulfide bond. In terms of processing, the vitamin K-dependent, enzymatic carboxylation of some glutamate residues allows the modified protein to bind calcium. Post-translationally, the iron and 2-oxoglutarate dependent 3-hydroxylation of aspartate and asparagine is (R) stereospecific within EGF domains. Can be either O-glucosylated or O-xylosylated at Ser-93 by POGLUT1. In terms of tissue distribution, plasma.

The protein resides in the secreted. It carries out the reaction Selective cleavage of Arg-|-Ile bond in factor X to form factor Xa.. In terms of biological role, initiates the extrinsic pathway of blood coagulation. Serine protease that circulates in the blood in a zymogen form. Factor VII is converted to factor VIIa by factor Xa, factor XIIa, factor IXa, or thrombin by minor proteolysis. In the presence of tissue factor and calcium ions, factor VIIa then converts factor X to factor Xa by limited proteolysis. Factor VIIa also converts factor IX to factor IXa in the presence of tissue factor and calcium. This Rattus norvegicus (Rat) protein is Coagulation factor VII (F7).